The chain runs to 94 residues: Co-chaperonin GroES (94 aa).

Belongs to the GroES chaperonin family. Heptamer of 7 subunits arranged in a ring. Interacts with the chaperonin GroEL.

The protein localises to the cytoplasm. Together with the chaperonin GroEL, plays an essential role in assisting protein folding. The GroEL-GroES system forms a nano-cage that allows encapsulation of the non-native substrate proteins and provides a physical environment optimized to promote and accelerate protein folding. GroES binds to the apical surface of the GroEL ring, thereby capping the opening of the GroEL channel. The sequence is that of Co-chaperonin GroES from Ehrlichia chaffeensis (strain ATCC CRL-10679 / Arkansas).